The chain runs to 367 residues: Cell-death-related nuclease 7 (367 aa).

The N-terminal stretch at M1–G18 is a signal peptide. An N-linked (GlcNAc...) asparagine glycan is attached at N253.

The protein belongs to the DNase II family.

In Caenorhabditis elegans, this protein is Cell-death-related nuclease 7 (crn-7).